The sequence spans 160 residues: Large ribosomal subunit protein eL21A (160 aa).

The segment at 114-138 (AKRKEAKAQGKTVQLRRQPAPPAKA) is disordered.

It belongs to the eukaryotic ribosomal protein eL21 family. Component of the large ribosomal subunit (LSU). Mature yeast ribosomes consist of a small (40S) and a large (60S) subunit. The 40S small subunit contains 1 molecule of ribosomal RNA (18S rRNA) and at least 33 different proteins. The large 60S subunit contains 3 rRNA molecules (25S, 5.8S and 5S rRNA) and at least 46 different proteins.

The protein resides in the cytoplasm. In terms of biological role, component of the ribosome, a large ribonucleoprotein complex responsible for the synthesis of proteins in the cell. The small ribosomal subunit (SSU) binds messenger RNAs (mRNAs) and translates the encoded message by selecting cognate aminoacyl-transfer RNA (tRNA) molecules. The large subunit (LSU) contains the ribosomal catalytic site termed the peptidyl transferase center (PTC), which catalyzes the formation of peptide bonds, thereby polymerizing the amino acids delivered by tRNAs into a polypeptide chain. The nascent polypeptides leave the ribosome through a tunnel in the LSU and interact with protein factors that function in enzymatic processing, targeting, and the membrane insertion of nascent chains at the exit of the ribosomal tunnel. This is Large ribosomal subunit protein eL21A (rpl2101) from Schizosaccharomyces pombe (strain 972 / ATCC 24843) (Fission yeast).